The chain runs to 469 residues: D-3-phosphoglycerate dehydrogenase 1 (469 aa).

Phosphoserine occurs at positions 22, 29, and 33. Residues 208-209 (HI), aspartate 228, 285-287 (ASR), and aspartate 311 each bind NAD(+). Arginine 287 is a catalytic residue. Glutamate 316 is an active-site residue. Catalysis depends on histidine 347, which acts as the Proton donor. An NAD(+)-binding site is contributed by 347-350 (HIGG). One can recognise an ACT domain in the interval 399 to 469 (RVLYIHQNVP…SAKISIRLLY (71 aa)).

Belongs to the D-isomer specific 2-hydroxyacid dehydrogenase family.

It catalyses the reaction (2R)-3-phosphoglycerate + NAD(+) = 3-phosphooxypyruvate + NADH + H(+). It carries out the reaction (R)-2-hydroxyglutarate + NAD(+) = 2-oxoglutarate + NADH + H(+). It functions in the pathway amino-acid biosynthesis; L-serine biosynthesis; L-serine from 3-phospho-D-glycerate: step 1/3. Functionally, catalyzes the reversible oxidation of 3-phospho-D-glycerate to 3-phosphonooxypyruvate, the first step of the phosphorylated L-serine biosynthesis pathway. Also catalyzes the reversible oxidation of 2-hydroxyglutarate to 2-oxoglutarate. In Saccharomyces cerevisiae (strain ATCC 204508 / S288c) (Baker's yeast), this protein is D-3-phosphoglycerate dehydrogenase 1 (SER3).